Consider the following 417-residue polypeptide: Serine hydroxymethyltransferase (417 aa).

(6S)-5,6,7,8-tetrahydrofolate is bound by residues Leu-121 and 125-127; that span reads GHL. Lys-229 is subject to N6-(pyridoxal phosphate)lysine. 355–357 contacts (6S)-5,6,7,8-tetrahydrofolate; that stretch reads SPF.

This sequence belongs to the SHMT family. As to quaternary structure, homodimer. The cofactor is pyridoxal 5'-phosphate.

The protein resides in the cytoplasm. The catalysed reaction is (6R)-5,10-methylene-5,6,7,8-tetrahydrofolate + glycine + H2O = (6S)-5,6,7,8-tetrahydrofolate + L-serine. It functions in the pathway one-carbon metabolism; tetrahydrofolate interconversion. The protein operates within amino-acid biosynthesis; glycine biosynthesis; glycine from L-serine: step 1/1. Functionally, catalyzes the reversible interconversion of serine and glycine with tetrahydrofolate (THF) serving as the one-carbon carrier. This reaction serves as the major source of one-carbon groups required for the biosynthesis of purines, thymidylate, methionine, and other important biomolecules. Also exhibits THF-independent aldolase activity toward beta-hydroxyamino acids, producing glycine and aldehydes, via a retro-aldol mechanism. In Shewanella baltica (strain OS185), this protein is Serine hydroxymethyltransferase.